A 157-amino-acid chain; its full sequence is Small ribosomal subunit protein uS7 (157 aa).

This sequence belongs to the universal ribosomal protein uS7 family. Part of the 30S ribosomal subunit. Contacts proteins S9 and S11.

Functionally, one of the primary rRNA binding proteins, it binds directly to 16S rRNA where it nucleates assembly of the head domain of the 30S subunit. Is located at the subunit interface close to the decoding center, probably blocks exit of the E-site tRNA. This is Small ribosomal subunit protein uS7 from Francisella philomiragia subsp. philomiragia (strain ATCC 25017 / CCUG 19701 / FSC 153 / O#319-036).